Reading from the N-terminus, the 356-residue chain is tRNA N6-adenosine threonylcarbamoyltransferase (356 aa).

Positions 115 and 119 each coordinate Fe cation. Substrate-binding positions include 138-142, aspartate 171, glycine 184, and asparagine 283; that span reads LVSGG. Aspartate 311 is a binding site for Fe cation.

Belongs to the KAE1 / TsaD family. It depends on Fe(2+) as a cofactor.

Its subcellular location is the cytoplasm. The enzyme catalyses L-threonylcarbamoyladenylate + adenosine(37) in tRNA = N(6)-L-threonylcarbamoyladenosine(37) in tRNA + AMP + H(+). Its function is as follows. Required for the formation of a threonylcarbamoyl group on adenosine at position 37 (t(6)A37) in tRNAs that read codons beginning with adenine. Is involved in the transfer of the threonylcarbamoyl moiety of threonylcarbamoyl-AMP (TC-AMP) to the N6 group of A37, together with TsaE and TsaB. TsaD likely plays a direct catalytic role in this reaction. The protein is tRNA N6-adenosine threonylcarbamoyltransferase of Prochlorococcus marinus (strain NATL1A).